A 623-amino-acid polypeptide reads, in one-letter code: V-type proton ATPase catalytic subunit A (623 aa).

252-259 serves as a coordination point for ATP; that stretch reads GAFGCGKT.

Belongs to the ATPase alpha/beta chains family. V-ATPase is a heteromultimeric enzyme composed of a peripheral catalytic V1 complex (main components: subunits A, B, C, D, E, and F) attached to an integral membrane V0 proton pore complex (main component: the proteolipid protein).

It carries out the reaction ATP + H2O + 4 H(+)(in) = ADP + phosphate + 5 H(+)(out). Catalytic subunit of the peripheral V1 complex of vacuolar ATPase. V-ATPase vacuolar ATPase is responsible for acidifying a variety of intracellular compartments in eukaryotic cells. The protein is V-type proton ATPase catalytic subunit A of Vigna radiata var. radiata (Mung bean).